The primary structure comprises 296 residues: tRNA dimethylallyltransferase (296 aa).

An ATP-binding site is contributed by 9–16; sequence GTTASGKS. 11–16 is a substrate binding site; it reads TASGKS. The interval 34–37 is interaction with substrate tRNA; sequence DSLA.

It belongs to the IPP transferase family. As to quaternary structure, monomer. The cofactor is Mg(2+).

It carries out the reaction adenosine(37) in tRNA + dimethylallyl diphosphate = N(6)-dimethylallyladenosine(37) in tRNA + diphosphate. In terms of biological role, catalyzes the transfer of a dimethylallyl group onto the adenine at position 37 in tRNAs that read codons beginning with uridine, leading to the formation of N6-(dimethylallyl)adenosine (i(6)A). The chain is tRNA dimethylallyltransferase from Campylobacter curvus (strain 525.92).